We begin with the raw amino-acid sequence, 299 residues long: Dermonecrotic toxin LiSicTox-alphaIVA1 (299 aa).

The signal sequence occupies residues methionine 1 to glycine 18. The active site involves histidine 30. Residues glutamate 50 and aspartate 52 each contribute to the Mg(2+) site. The active-site Nucleophile is the histidine 66. 2 disulfides stabilise this stretch: cysteine 70/cysteine 76 and cysteine 72/cysteine 217. Aspartate 110 contacts Mg(2+).

This sequence belongs to the arthropod phospholipase D family. Class II subfamily. Class IIa sub-subfamily. It depends on Mg(2+) as a cofactor. Expressed by the venom gland.

The protein resides in the secreted. It carries out the reaction an N-(acyl)-sphingosylphosphocholine = an N-(acyl)-sphingosyl-1,3-cyclic phosphate + choline. It catalyses the reaction an N-(acyl)-sphingosylphosphoethanolamine = an N-(acyl)-sphingosyl-1,3-cyclic phosphate + ethanolamine. The enzyme catalyses a 1-acyl-sn-glycero-3-phosphocholine = a 1-acyl-sn-glycero-2,3-cyclic phosphate + choline. The catalysed reaction is a 1-acyl-sn-glycero-3-phosphoethanolamine = a 1-acyl-sn-glycero-2,3-cyclic phosphate + ethanolamine. Functionally, dermonecrotic toxins cleave the phosphodiester linkage between the phosphate and headgroup of certain phospholipids (sphingolipid and lysolipid substrates), forming an alcohol (often choline) and a cyclic phosphate. This toxin acts on sphingomyelin (SM) with high activity. It may also act on ceramide phosphoethanolamine (CPE), lysophosphatidylcholine (LPC) and lysophosphatidylethanolamine (LPE), but not on lysophosphatidylserine (LPS), and lysophosphatidylglycerol (LPG). It acts by transphosphatidylation, releasing exclusively cyclic phosphate products as second products. Has hemolytic activity in human erythrocytes in a dose-dependent manner. In vivo, this toxin induces dermonecrosis, edema, hemorrhage, massive inflammatory response, as well as vascular permeability. In addition, thrombus formation has also been detected in dermal blood vessels. It also induces platelet aggregation. It is noteworthy that a Glu-248 replaces the Asp present in paralogs, without decrease in catalytic and hemolytic activities. This chain is Dermonecrotic toxin LiSicTox-alphaIVA1, found in Loxosceles intermedia (Brown spider).